A 348-amino-acid chain; its full sequence is Nicotinate-nucleotide--dimethylbenzimidazole phosphoribosyltransferase (348 aa).

Glutamate 316 functions as the Proton acceptor in the catalytic mechanism.

It belongs to the CobT family.

The catalysed reaction is 5,6-dimethylbenzimidazole + nicotinate beta-D-ribonucleotide = alpha-ribazole 5'-phosphate + nicotinate + H(+). Its pathway is nucleoside biosynthesis; alpha-ribazole biosynthesis; alpha-ribazole from 5,6-dimethylbenzimidazole: step 1/2. Its function is as follows. Catalyzes the synthesis of alpha-ribazole-5'-phosphate from nicotinate mononucleotide (NAMN) and 5,6-dimethylbenzimidazole (DMB). This is Nicotinate-nucleotide--dimethylbenzimidazole phosphoribosyltransferase from Xanthomonas axonopodis pv. citri (strain 306).